Consider the following 120-residue polypeptide: Glycine cleavage system H protein (120 aa).

The region spanning 17–99 (VATVGITNYA…QGAGWFFKLK (83 aa)) is the Lipoyl-binding domain. An N6-lipoyllysine modification is found at lysine 58.

It belongs to the GcvH family. As to quaternary structure, the glycine cleavage system is composed of four proteins: P, T, L and H. The cofactor is (R)-lipoate.

Functionally, the glycine cleavage system catalyzes the degradation of glycine. The H protein shuttles the methylamine group of glycine from the P protein to the T protein. The polypeptide is Glycine cleavage system H protein (Rhizobium etli (strain ATCC 51251 / DSM 11541 / JCM 21823 / NBRC 15573 / CFN 42)).